Consider the following 214-residue polypeptide: tRNA (guanine-N(7)-)-methyltransferase (214 aa).

Residues Asp-35, Glu-60, Asn-87, and Asp-113 each coordinate S-adenosyl-L-methionine. Asp-113 is an active-site residue. Residues Lys-117 and Asp-149 each coordinate substrate.

Belongs to the class I-like SAM-binding methyltransferase superfamily. TrmB family.

It carries out the reaction guanosine(46) in tRNA + S-adenosyl-L-methionine = N(7)-methylguanosine(46) in tRNA + S-adenosyl-L-homocysteine. The protein operates within tRNA modification; N(7)-methylguanine-tRNA biosynthesis. Its function is as follows. Catalyzes the formation of N(7)-methylguanine at position 46 (m7G46) in tRNA. This Prochlorococcus marinus (strain NATL1A) protein is tRNA (guanine-N(7)-)-methyltransferase.